A 488-amino-acid chain; its full sequence is Glutamyl-tRNA(Gln) amidotransferase subunit A (488 aa).

Catalysis depends on charge relay system residues K77 and S152. Catalysis depends on S176, which acts as the Acyl-ester intermediate.

Belongs to the amidase family. GatA subfamily. In terms of assembly, heterotrimer of A, B and C subunits.

It catalyses the reaction L-glutamyl-tRNA(Gln) + L-glutamine + ATP + H2O = L-glutaminyl-tRNA(Gln) + L-glutamate + ADP + phosphate + H(+). Allows the formation of correctly charged Gln-tRNA(Gln) through the transamidation of misacylated Glu-tRNA(Gln) in organisms which lack glutaminyl-tRNA synthetase. The reaction takes place in the presence of glutamine and ATP through an activated gamma-phospho-Glu-tRNA(Gln). The polypeptide is Glutamyl-tRNA(Gln) amidotransferase subunit A (Streptococcus pyogenes serotype M1).